A 348-amino-acid chain; its full sequence is Quinolinate synthase (348 aa).

Residues histidine 47 and serine 68 each contribute to the iminosuccinate site. Cysteine 113 is a [4Fe-4S] cluster binding site. Iminosuccinate is bound by residues 139–141 and serine 156; that span reads YAN. Cysteine 200 lines the [4Fe-4S] cluster pocket. Iminosuccinate-binding positions include 226-228 and threonine 243; that span reads HPE. Cysteine 297 lines the [4Fe-4S] cluster pocket.

This sequence belongs to the quinolinate synthase family. Type 1 subfamily. [4Fe-4S] cluster is required as a cofactor.

The protein localises to the cytoplasm. The enzyme catalyses iminosuccinate + dihydroxyacetone phosphate = quinolinate + phosphate + 2 H2O + H(+). It functions in the pathway cofactor biosynthesis; NAD(+) biosynthesis; quinolinate from iminoaspartate: step 1/1. Its function is as follows. Catalyzes the condensation of iminoaspartate with dihydroxyacetone phosphate to form quinolinate. The chain is Quinolinate synthase from Sodalis glossinidius (strain morsitans).